Here is a 149-residue protein sequence, read N- to C-terminus: D-aminoacyl-tRNA deacylase (149 aa).

Residues Gly137–Pro138 carry the Gly-cisPro motif, important for rejection of L-amino acids motif.

The protein belongs to the DTD family. As to quaternary structure, homodimer.

Its subcellular location is the cytoplasm. The enzyme catalyses glycyl-tRNA(Ala) + H2O = tRNA(Ala) + glycine + H(+). The catalysed reaction is a D-aminoacyl-tRNA + H2O = a tRNA + a D-alpha-amino acid + H(+). Functionally, an aminoacyl-tRNA editing enzyme that deacylates mischarged D-aminoacyl-tRNAs. Also deacylates mischarged glycyl-tRNA(Ala), protecting cells against glycine mischarging by AlaRS. Acts via tRNA-based rather than protein-based catalysis; rejects L-amino acids rather than detecting D-amino acids in the active site. By recycling D-aminoacyl-tRNA to D-amino acids and free tRNA molecules, this enzyme counteracts the toxicity associated with the formation of D-aminoacyl-tRNA entities in vivo and helps enforce protein L-homochirality. The protein is D-aminoacyl-tRNA deacylase of Thermosipho africanus (strain TCF52B).